A 97-amino-acid chain; its full sequence is UPF0125 protein plu3376 (97 aa).

This sequence belongs to the UPF0125 (RnfH) family.

The chain is UPF0125 protein plu3376 from Photorhabdus laumondii subsp. laumondii (strain DSM 15139 / CIP 105565 / TT01) (Photorhabdus luminescens subsp. laumondii).